The primary structure comprises 119 residues: Large ribosomal subunit protein bL20 (119 aa).

The protein belongs to the bacterial ribosomal protein bL20 family.

In terms of biological role, binds directly to 23S ribosomal RNA and is necessary for the in vitro assembly process of the 50S ribosomal subunit. It is not involved in the protein synthesizing functions of that subunit. The protein is Large ribosomal subunit protein bL20 of Burkholderia cenocepacia (strain HI2424).